The following is a 398-amino-acid chain: Phosphoglycerate kinase (398 aa).

Residues 21-23 (DFN), R36, 59-62 (HFGR), R117, and R150 contribute to the substrate site. ATP contacts are provided by residues K200, E321, and 351–354 (GGDS).

The protein belongs to the phosphoglycerate kinase family. Monomer.

The protein localises to the cytoplasm. It carries out the reaction (2R)-3-phosphoglycerate + ATP = (2R)-3-phospho-glyceroyl phosphate + ADP. It participates in carbohydrate degradation; glycolysis; pyruvate from D-glyceraldehyde 3-phosphate: step 2/5. This Wolbachia sp. subsp. Drosophila simulans (strain wRi) protein is Phosphoglycerate kinase.